A 690-amino-acid chain; its full sequence is Elongation factor G (690 aa).

In terms of domain architecture, tr-type G spans 8-283 (SKCRNIGIMA…AVVDFLPAPN (276 aa)). Residues 17 to 24 (AHIDAGKT), 81 to 85 (DTPGH), and 135 to 138 (NKMD) each bind GTP.

Belongs to the TRAFAC class translation factor GTPase superfamily. Classic translation factor GTPase family. EF-G/EF-2 subfamily.

The protein resides in the cytoplasm. Functionally, catalyzes the GTP-dependent ribosomal translocation step during translation elongation. During this step, the ribosome changes from the pre-translocational (PRE) to the post-translocational (POST) state as the newly formed A-site-bound peptidyl-tRNA and P-site-bound deacylated tRNA move to the P and E sites, respectively. Catalyzes the coordinated movement of the two tRNA molecules, the mRNA and conformational changes in the ribosome. The protein is Elongation factor G of Ehrlichia chaffeensis (strain ATCC CRL-10679 / Arkansas).